Here is a 279-residue protein sequence, read N- to C-terminus: Tryptophan 2,3-dioxygenase (279 aa).

Residues 48–52, Tyr110, and Arg114 each bind substrate; that span reads FIIQH. His237 is a binding site for heme. Thr251 serves as a coordination point for substrate.

This sequence belongs to the tryptophan 2,3-dioxygenase family. As to quaternary structure, homotetramer. Heme serves as cofactor.

The catalysed reaction is L-tryptophan + O2 = N-formyl-L-kynurenine. Its pathway is amino-acid degradation; L-tryptophan degradation via kynurenine pathway; L-kynurenine from L-tryptophan: step 1/2. Its function is as follows. Heme-dependent dioxygenase that catalyzes the oxidative cleavage of the L-tryptophan (L-Trp) pyrrole ring and converts L-tryptophan to N-formyl-L-kynurenine. Catalyzes the oxidative cleavage of the indole moiety. This is Tryptophan 2,3-dioxygenase from Bradyrhizobium diazoefficiens (strain JCM 10833 / BCRC 13528 / IAM 13628 / NBRC 14792 / USDA 110).